A 523-amino-acid chain; its full sequence is Acetyl-CoA hydrolase (523 aa).

277-281 contacts CoA; that stretch reads GIGNI. E302 (5-glutamyl coenzyme A thioester intermediate) is an active-site residue. Residues N392 and G396 each coordinate CoA.

Belongs to the acetyl-CoA hydrolase/transferase family.

It localises to the cytoplasm. The catalysed reaction is acetyl-CoA + H2O = acetate + CoA + H(+). Presumably involved in regulating the intracellular acetyl-CoA pool for fatty acid and cholesterol synthesis and fatty acid oxidation. This Kluyveromyces lactis (strain ATCC 8585 / CBS 2359 / DSM 70799 / NBRC 1267 / NRRL Y-1140 / WM37) (Yeast) protein is Acetyl-CoA hydrolase (ACH1).